The following is a 257-amino-acid chain: NAD kinase (257 aa).

Asp46 (proton acceptor) is an active-site residue. Residues 46-47, 116-117, Asp146, Ala154, 157-162, and Asn218 contribute to the NAD(+) site; these read DG, NE, and TAYNLS.

Belongs to the NAD kinase family. Requires a divalent metal cation as cofactor.

The protein resides in the cytoplasm. The enzyme catalyses NAD(+) + ATP = ADP + NADP(+) + H(+). Its function is as follows. Involved in the regulation of the intracellular balance of NAD and NADP, and is a key enzyme in the biosynthesis of NADP. Catalyzes specifically the phosphorylation on 2'-hydroxyl of the adenosine moiety of NAD to yield NADP. This Brucella suis biovar 1 (strain 1330) protein is NAD kinase.